The primary structure comprises 224 residues: Phosphoribosylformylglycinamidine synthase subunit PurQ (224 aa).

The Glutamine amidotransferase type-1 domain maps to 1 to 224 (MIAIIKFPGT…ILLRRLGEWA (224 aa)). Cys-84 serves as the catalytic Nucleophile. Active-site residues include His-196 and Glu-198.

In terms of assembly, part of the FGAM synthase complex composed of 1 PurL, 1 PurQ and 2 PurS subunits.

It localises to the cytoplasm. It carries out the reaction N(2)-formyl-N(1)-(5-phospho-beta-D-ribosyl)glycinamide + L-glutamine + ATP + H2O = 2-formamido-N(1)-(5-O-phospho-beta-D-ribosyl)acetamidine + L-glutamate + ADP + phosphate + H(+). The catalysed reaction is L-glutamine + H2O = L-glutamate + NH4(+). Its pathway is purine metabolism; IMP biosynthesis via de novo pathway; 5-amino-1-(5-phospho-D-ribosyl)imidazole from N(2)-formyl-N(1)-(5-phospho-D-ribosyl)glycinamide: step 1/2. Its function is as follows. Part of the phosphoribosylformylglycinamidine synthase complex involved in the purines biosynthetic pathway. Catalyzes the ATP-dependent conversion of formylglycinamide ribonucleotide (FGAR) and glutamine to yield formylglycinamidine ribonucleotide (FGAM) and glutamate. The FGAM synthase complex is composed of three subunits. PurQ produces an ammonia molecule by converting glutamine to glutamate. PurL transfers the ammonia molecule to FGAR to form FGAM in an ATP-dependent manner. PurS interacts with PurQ and PurL and is thought to assist in the transfer of the ammonia molecule from PurQ to PurL. The chain is Phosphoribosylformylglycinamidine synthase subunit PurQ from Saccharolobus solfataricus (strain ATCC 35092 / DSM 1617 / JCM 11322 / P2) (Sulfolobus solfataricus).